A 166-amino-acid chain; its full sequence is MACVNEPSPKLQKLDRNGIHGDSSPSPFFKVKKLSEKAVIPTRGSPLSAGYDLSSAVDSKVPARGKALIPTDLSIAVPEGTYARIAPRSGLAWKHSIDVGAGVIDADYRGPVGVILFNHSDADFEVKFGDRIAQLIIEKIVTPDVVEVDDLDETVRGDGGFGSTGV.

Residues 1 to 24 form a disordered region; that stretch reads MACVNEPSPKLQKLDRNGIHGDSS. Glu-138 contacts Mg(2+).

The protein belongs to the dUTPase family. As to quaternary structure, homotrimer. Requires Mg(2+) as cofactor.

It catalyses the reaction dUTP + H2O = dUMP + diphosphate + H(+). It functions in the pathway pyrimidine metabolism; dUMP biosynthesis; dUMP from dCTP (dUTP route): step 2/2. Its function is as follows. This enzyme is involved in nucleotide metabolism: it produces dUMP, the immediate precursor of thymidine nucleotides and it decreases the intracellular concentration of dUTP, preventing uracil incorporation into DNA. This is Deoxyuridine 5'-triphosphate nucleotidohydrolase (DUT) from Arabidopsis thaliana (Mouse-ear cress).